The sequence spans 432 residues: Trigger factor (432 aa).

The PPIase FKBP-type domain maps to 161 to 246 (EDRVTIDFTG…LKKVEERELP (86 aa)).

This sequence belongs to the FKBP-type PPIase family. Tig subfamily. As to quaternary structure, homodimer and monomer. In vivo most of the ribosomes are in complex with monomeric TF. Uncomplexed TF, however, is in a monomer-dimer equilibrium with approximately two thirds of TF existing in a dimeric state.

The protein resides in the cytoplasm. The enzyme catalyses [protein]-peptidylproline (omega=180) = [protein]-peptidylproline (omega=0). In terms of biological role, involved in protein export. Acts as a chaperone by maintaining the newly synthesized protein in an open conformation. Functions as a peptidyl-prolyl cis-trans isomerase. The polypeptide is Trigger factor (Escherichia coli O6:K15:H31 (strain 536 / UPEC)).